The following is a 264-amino-acid chain: Sirohydrochlorin cobaltochelatase (264 aa).

6 residues coordinate Co-sirohydrochlorin: G45, I84, I85, D88, E89, and K92. The Proton acceptor role is filled by H145. H145 and E175 together coordinate Co(2+). 3 residues coordinate Co-sirohydrochlorin: L202, V203, and H207. H207 is a binding site for Co(2+).

This sequence belongs to the CbiK family. Homotrimer.

The enzyme catalyses Co-sirohydrochlorin + 2 H(+) = sirohydrochlorin + Co(2+). It carries out the reaction Co-precorrin-2 + 3 H(+) = precorrin-2 + Co(2+). It functions in the pathway cofactor biosynthesis; adenosylcobalamin biosynthesis; cob(II)yrinate a,c-diamide from sirohydrochlorin (anaerobic route): step 1/10. Its function is as follows. Cobalt chelatase responsible for the insertion of cobalt during anaerobic cobalamin biosynthesis. Can catalyze the insertion of Co(2+) into either sirohydrochlorin or precorrin-2. It is not clear which is the natural substrate in Salmonella. This Salmonella typhimurium (strain LT2 / SGSC1412 / ATCC 700720) protein is Sirohydrochlorin cobaltochelatase.